We begin with the raw amino-acid sequence, 448 residues long: tRNA-2-methylthio-N(6)-dimethylallyladenosine synthase (448 aa).

The MTTase N-terminal domain occupies 2–119; the sequence is KKLYIKTFGC…LSDLIAQRRK (118 aa). Residues C11, C48, C82, C156, C160, and C163 each coordinate [4Fe-4S] cluster. Positions 142–375 constitute a Radical SAM core domain; it reads RQTRGSAYVS…LALIEGQSNQ (234 aa). The TRAM domain occupies 378–444; sequence QKMLGKTERV…NYTLRGELVE (67 aa).

This sequence belongs to the methylthiotransferase family. MiaB subfamily. As to quaternary structure, monomer. Requires [4Fe-4S] cluster as cofactor.

Its subcellular location is the cytoplasm. The enzyme catalyses N(6)-dimethylallyladenosine(37) in tRNA + (sulfur carrier)-SH + AH2 + 2 S-adenosyl-L-methionine = 2-methylsulfanyl-N(6)-dimethylallyladenosine(37) in tRNA + (sulfur carrier)-H + 5'-deoxyadenosine + L-methionine + A + S-adenosyl-L-homocysteine + 2 H(+). In terms of biological role, catalyzes the methylthiolation of N6-(dimethylallyl)adenosine (i(6)A), leading to the formation of 2-methylthio-N6-(dimethylallyl)adenosine (ms(2)i(6)A) at position 37 in tRNAs that read codons beginning with uridine. The polypeptide is tRNA-2-methylthio-N(6)-dimethylallyladenosine synthase (Polynucleobacter asymbioticus (strain DSM 18221 / CIP 109841 / QLW-P1DMWA-1) (Polynucleobacter necessarius subsp. asymbioticus)).